Reading from the N-terminus, the 197-residue chain is Beta-crystallin A2 (197 aa).

An N-terminal arm region spans residues 1–11; that stretch reads MSSAPAPGSAP. 2 consecutive Beta/gamma crystallin 'Greek key' domains span residues 12–52 and 53–99; these read VCLT…KVEN and GAWV…RPVL. Positions 100 to 105 are connecting peptide; it reads CANHSD. Beta/gamma crystallin 'Greek key' domains lie at 106–147 and 148–196; these read SRVT…KVSS and GAWV…RRVQ.

Belongs to the beta/gamma-crystallin family. Homo/heterodimer, or complexes of higher-order. The structure of beta-crystallin oligomers seems to be stabilized through interactions between the N-terminal arms.

Crystallins are the dominant structural components of the vertebrate eye lens. In Mus musculus (Mouse), this protein is Beta-crystallin A2 (Cryba2).